Consider the following 425-residue polypeptide: Serine hydroxymethyltransferase (425 aa).

(6S)-5,6,7,8-tetrahydrofolate contacts are provided by residues Leu-128 and 132–134; that span reads GHL. Residue Lys-237 is modified to N6-(pyridoxal phosphate)lysine.

It belongs to the SHMT family. In terms of assembly, homodimer. Requires pyridoxal 5'-phosphate as cofactor.

It is found in the cytoplasm. The enzyme catalyses (6R)-5,10-methylene-5,6,7,8-tetrahydrofolate + glycine + H2O = (6S)-5,6,7,8-tetrahydrofolate + L-serine. It functions in the pathway one-carbon metabolism; tetrahydrofolate interconversion. The protein operates within amino-acid biosynthesis; glycine biosynthesis; glycine from L-serine: step 1/1. In terms of biological role, catalyzes the reversible interconversion of serine and glycine with tetrahydrofolate (THF) serving as the one-carbon carrier. This reaction serves as the major source of one-carbon groups required for the biosynthesis of purines, thymidylate, methionine, and other important biomolecules. Also exhibits THF-independent aldolase activity toward beta-hydroxyamino acids, producing glycine and aldehydes, via a retro-aldol mechanism. This is Serine hydroxymethyltransferase from Wolbachia pipientis subsp. Culex pipiens (strain wPip).